The primary structure comprises 281 residues: NADPH-dependent 7-cyano-7-deazaguanine reductase (281 aa).

87–89 is a substrate binding site; it reads IES. 89–90 provides a ligand contact to NADPH; it reads SK. The active-site Thioimide intermediate is C188. D195 serves as the catalytic Proton donor. 227 to 228 serves as a coordination point for substrate; sequence HE. Position 256 to 257 (256 to 257) interacts with NADPH; sequence RG. Residues 261–281 form a disordered region; that stretch reads INPYRSTEQAKPDHNHRMARQ. Basic and acidic residues predominate over residues 268 to 281; sequence EQAKPDHNHRMARQ.

Belongs to the GTP cyclohydrolase I family. QueF type 2 subfamily. As to quaternary structure, homodimer.

The protein resides in the cytoplasm. The enzyme catalyses 7-aminomethyl-7-carbaguanine + 2 NADP(+) = 7-cyano-7-deazaguanine + 2 NADPH + 3 H(+). It functions in the pathway tRNA modification; tRNA-queuosine biosynthesis. In terms of biological role, catalyzes the NADPH-dependent reduction of 7-cyano-7-deazaguanine (preQ0) to 7-aminomethyl-7-deazaguanine (preQ1). The polypeptide is NADPH-dependent 7-cyano-7-deazaguanine reductase (Vibrio vulnificus (strain CMCP6)).